The chain runs to 1829 residues: Protein let-418 (1829 aa).

Composition is skewed to acidic residues over residues 1–17 (MSTE…ESME) and 25–39 (ATEE…EQGD). Disordered regions lie at residues 1–81 (MSTE…YNST) and 147–198 (MAAQ…SDQE). The segment covering 48–63 (RSSRKKGGKGGKKGSK) has biased composition (basic residues). 2 consecutive PHD-type zinc fingers follow at residues 256-303 (NDYC…CIEH) and 317-365 (DEFC…CETV). Chromo domains lie at 401-458 (LKPP…PPEF) and 489-550 (MQIH…NEDI). Residues 614 to 798 (RHCWSNGTDA…FHLLNFLSKE (185 aa)) enclose the Helicase ATP-binding domain. 627–634 (DEMGLGKT) serves as a coordination point for ATP. A DEAH box motif is present at residues 749–752 (DEAH). The Helicase C-terminal domain maps to 930–1093 (LLQKMLRKLK…GKTMSKTELD (164 aa)). Disordered regions lie at residues 1168-1198 (ASYQ…EPDP), 1234-1289 (SENM…MPPL), 1415-1495 (AANG…ARPS), and 1745-1829 (NGER…PMET). A compositionally biased stretch (acidic residues) spans 1177–1186 (GQEEEEEEET). Polar residues-rich tracts occupy residues 1234-1247 (SENM…QNQT) and 1418-1427 (GSAQGSSRST). Basic and acidic residues predominate over residues 1429-1444 (KPKEEPKEEPMEKEDA). The segment covering 1446–1455 (ETVNGATSEP) has biased composition (polar residues). Residues 1474–1490 (DEAKEPKEEPIETEKPR) are compositionally biased toward basic and acidic residues. The segment covering 1749-1773 (MEEDEPVEAEEEEGVKQEPDDETQD) has biased composition (acidic residues). Over residues 1792–1811 (DVPSTSAAAAVSSETAADAE) the composition is skewed to low complexity. Residues 1819-1829 (APTDEPEPMET) are compositionally biased toward acidic residues.

In terms of assembly, component of the MEC (MEP-1-containing complex) complex that contains let-418, mep-1 and hda-1. Component of a NURD complex that contains let-418, hda-1, lin-40 and lin-53. Interacts with lin-1. Interacts with pie-1. Interacts with akir-1. As to expression, expressed in embryos and larva.

The protein localises to the nucleus. Its function is as follows. Part of a NuRD (Nucleosome Remodeling and Deacetylase) complex which is implicated in the synMuv B pathway that negatively regulates specification of vulval cell fate. This negative regulation is thought to be mediated via interaction with the promoter of lin-39, a key regulator in vulva development, and is dependent on the presence lin-1. Contributes to negative regulation of lag-2 which is expressed in the gut during larval development. Has a broad role in development. In association with akir-1, plays a role in regulating the transcription of antimicrobial peptide genes in response to fungal infection. This Caenorhabditis elegans protein is Protein let-418.